The chain runs to 813 residues: Leucine--tRNA ligase (813 aa).

The 'HIGH' region signature appears at 41–51; sequence PYPSGTLHMGH. Residues 575 to 579 carry the 'KMSKS' region motif; that stretch reads KMSKS. Lysine 578 contacts ATP.

It belongs to the class-I aminoacyl-tRNA synthetase family.

The protein resides in the cytoplasm. It carries out the reaction tRNA(Leu) + L-leucine + ATP = L-leucyl-tRNA(Leu) + AMP + diphosphate. In Francisella tularensis subsp. tularensis (strain WY96-3418), this protein is Leucine--tRNA ligase.